Reading from the N-terminus, the 141-residue chain is HTH-type transcriptional repressor NsrR (141 aa).

Residues 2–129 (QLTSFTDYGL…DNYTLADLVE (128 aa)) enclose the HTH rrf2-type domain. The segment at residues 28 to 51 (ISQVTEVYGVSRNHMVKIINQLSR) is a DNA-binding region (H-T-H motif). Positions 91, 96, and 102 each coordinate [2Fe-2S] cluster.

It depends on [2Fe-2S] cluster as a cofactor.

In terms of biological role, nitric oxide-sensitive repressor of genes involved in protecting the cell against nitrosative stress. May require iron for activity. This is HTH-type transcriptional repressor NsrR from Enterobacter sp. (strain 638).